The primary structure comprises 215 residues: Glutathione S-transferase D2 (215 aa).

A GST N-terminal domain is found at 1–80; that stretch reads MDFYYMPGGG…YLVEKYGKDD (80 aa). Residues 50–52 and 64–66 contribute to the glutathione site; these read HTI and ESR. The GST C-terminal domain maps to 86 to 212; it reads DPKKRAVINQ…MKALFDARKL (127 aa).

It belongs to the GST superfamily. Delta family. As to quaternary structure, homodimer.

It catalyses the reaction RX + glutathione = an S-substituted glutathione + a halide anion + H(+). Its function is as follows. Conjugation of reduced glutathione to a wide number of exogenous and endogenous hydrophobic electrophiles. May be involved in detoxification. In Drosophila melanogaster (Fruit fly), this protein is Glutathione S-transferase D2.